Here is a 64-residue protein sequence, read N- to C-terminus: Large ribosomal subunit protein uL30 (64 aa).

Belongs to the universal ribosomal protein uL30 family. As to quaternary structure, part of the 50S ribosomal subunit.

This is Large ribosomal subunit protein uL30 from Syntrophus aciditrophicus (strain SB).